The following is a 339-amino-acid chain: Glyceraldehyde-3-phosphate dehydrogenase (339 aa).

Residues Arg-12–Ile-13, Asp-35, and Lys-84 each bind NAD(+). Residues Ser-155–Thr-157, Thr-186, Thr-215–Gly-216, and Arg-238 each bind D-glyceraldehyde 3-phosphate. The Nucleophile role is filled by Cys-156. Asn-320 contacts NAD(+).

It belongs to the glyceraldehyde-3-phosphate dehydrogenase family. Homotetramer.

It is found in the cytoplasm. It catalyses the reaction D-glyceraldehyde 3-phosphate + phosphate + NAD(+) = (2R)-3-phospho-glyceroyl phosphate + NADH + H(+). The protein operates within carbohydrate degradation; glycolysis; pyruvate from D-glyceraldehyde 3-phosphate: step 1/5. In Mastigamoeba balamuthi (Phreatamoeba balamuthi), this protein is Glyceraldehyde-3-phosphate dehydrogenase (GAPD).